The primary structure comprises 555 residues: Dihydroxy-acid dehydratase (555 aa).

Asp78 serves as a coordination point for Mg(2+). [2Fe-2S] cluster is bound at residue Cys119. 2 residues coordinate Mg(2+): Asp120 and Lys121. Position 121 is an N6-carboxylysine (Lys121). Residue Cys191 participates in [2Fe-2S] cluster binding. Mg(2+) is bound at residue Glu444. Ser470 functions as the Proton acceptor in the catalytic mechanism.

Belongs to the IlvD/Edd family. Homodimer. The cofactor is [2Fe-2S] cluster. Requires Mg(2+) as cofactor.

The catalysed reaction is (2R)-2,3-dihydroxy-3-methylbutanoate = 3-methyl-2-oxobutanoate + H2O. It carries out the reaction (2R,3R)-2,3-dihydroxy-3-methylpentanoate = (S)-3-methyl-2-oxopentanoate + H2O. It participates in amino-acid biosynthesis; L-isoleucine biosynthesis; L-isoleucine from 2-oxobutanoate: step 3/4. The protein operates within amino-acid biosynthesis; L-valine biosynthesis; L-valine from pyruvate: step 3/4. Functionally, functions in the biosynthesis of branched-chain amino acids. Catalyzes the dehydration of (2R,3R)-2,3-dihydroxy-3-methylpentanoate (2,3-dihydroxy-3-methylvalerate) into 2-oxo-3-methylpentanoate (2-oxo-3-methylvalerate) and of (2R)-2,3-dihydroxy-3-methylbutanoate (2,3-dihydroxyisovalerate) into 2-oxo-3-methylbutanoate (2-oxoisovalerate), the penultimate precursor to L-isoleucine and L-valine, respectively. The chain is Dihydroxy-acid dehydratase from Maridesulfovibrio salexigens (strain ATCC 14822 / DSM 2638 / NCIMB 8403 / VKM B-1763) (Desulfovibrio salexigens).